A 199-amino-acid chain; its full sequence is V-set and transmembrane domain-containing protein 5 (199 aa).

The first 27 residues, 1–27 (MRPLRCGERTQGIPLGLLAFWVTAARC), serve as a signal peptide directing secretion. The Extracellular segment spans residues 28-146 (LQSQGVSLYI…VSEIRYEDLH (119 aa)). One can recognise an Ig-like C2-type domain in the interval 35-138 (LYIPQSAINA…QSGTILLRVS (104 aa)). Residues asparagine 43, asparagine 87, and asparagine 101 are each glycosylated (N-linked (GlcNAc...) asparagine). The chain crosses the membrane as a helical span at residues 147–167 (FVAVFFALLAAVAVVLISLMW). Residues 168–199 (VCNQCAYKFQRKRRYKLKESTTEEIEMKEVEC) are Cytoplasmic-facing. The tract at residues 169–185 (CNQCAYKFQRKRRYKLK) is important for CDC42-dependent filopodia induction.

Can homooligomerize through cis interactions within the same cell membrane. N-glycosylated. Highly expressed in the central nervous system (CNS), with the highest expression in thalamus, hippocampus, cerebrum, midbrain and spinal cord. Also highly expressed in stomach, kidney and small intestine.

The protein resides in the cell membrane. It is found in the cell projection. The protein localises to the dendrite. Its subcellular location is the axon. Functionally, cell adhesion-like membrane protein of the central nervous system (CNS) which modulates both the position and complexity of central neurons by altering their membrane morphology and dynamics. Involved in the formation of neuronal dendrites and protrusions including dendritic filopodia. In synaptogenesis, regulates synapse formation by altering dendritic spine morphology and actin distribution. Promotes formation of unstable neuronal spines such as thin and branched types. Regulates neuronal morphogenesis and migration during cortical development in the brain. The sequence is that of V-set and transmembrane domain-containing protein 5 from Mus musculus (Mouse).